A 1151-amino-acid chain; its full sequence is Protein BREAST CANCER SUSCEPTIBILITY 2 homolog A (1151 aa).

BRCA2 repeat units follow at residues 63-97, 116-150, 163-197, and 257-291; these read MPGE…EKVT, TAET…SDKI, FGVS…LEED, and LKVP…DPEL. A disordered region spans residues 408–427; the sequence is GFIPRGRQPGRPADQPLVDI.

As to quaternary structure, interacts with RAD51 and DMC1. Interacts with DSS1(I). Expressed in flower buds.

Functionally, involved in double-strand break repair and/or homologous recombination by mediating RAD51- and DMC1-facilitated DNA repair. Plays an essential role in both somatic and meiotic homologous recombination. Is crucial for the formation of RAD51 and DMC1 foci during male meiotic homologous recombination in prophase I. The protein is Protein BREAST CANCER SUSCEPTIBILITY 2 homolog A of Arabidopsis thaliana (Mouse-ear cress).